Consider the following 160-residue polypeptide: MKTYSAKPAEISKKWILIDATNLVLGRLAAKVAVVLRGKDKPTYTPHMDCGNNVIIINAEQVKLTGDKSNAKNGKFYYRHSGFPGGIKVTTAGKILQSNYPERIIQLAVKRMLPSNKLGRKQFSNLYVYKGQTHPHAAQTPVLYDFAGKNSKNIRNQNIV.

It belongs to the universal ribosomal protein uL13 family. As to quaternary structure, part of the 50S ribosomal subunit.

This protein is one of the early assembly proteins of the 50S ribosomal subunit, although it is not seen to bind rRNA by itself. It is important during the early stages of 50S assembly. The chain is Large ribosomal subunit protein uL13 from Orientia tsutsugamushi (strain Ikeda) (Rickettsia tsutsugamushi).